We begin with the raw amino-acid sequence, 244 residues long: Haloacid dehalogenase-like hydrolase domain-containing protein Sgpp (244 aa).

The active-site Nucleophile is the Asp28. 3 residues coordinate Mg(2+): Asp28, Asp30, and Asp189. Asp30 (proton donor) is an active-site residue.

It belongs to the HAD-like hydrolase superfamily. DOG/GPP family. Requires Mg(2+) as cofactor. As to expression, ubiquitous with highest expression in flowers.

Its function is as follows. Acts as a phosphosugar phosphatase on a broad range of sugar phosphate substrates with preferential activity on D-ribose-5-phosphate, 2-deoxy-D-ribose-5-phosphate, 2-deoxy-D-glucose-6-phosphate, and D-mannose-6-phosphate and with a lower activity on D-fructose-1-phosphate, D-glucose-6-phosphate, DL-glycerol-3-phosphate, and D-fructose-6-phosphate. The chain is Haloacid dehalogenase-like hydrolase domain-containing protein Sgpp (SGPP) from Arabidopsis thaliana (Mouse-ear cress).